The primary structure comprises 413 residues: Gamma-glutamyl phosphate reductase (413 aa).

This sequence belongs to the gamma-glutamyl phosphate reductase family.

The protein localises to the cytoplasm. It carries out the reaction L-glutamate 5-semialdehyde + phosphate + NADP(+) = L-glutamyl 5-phosphate + NADPH + H(+). Its pathway is amino-acid biosynthesis; L-proline biosynthesis; L-glutamate 5-semialdehyde from L-glutamate: step 2/2. In terms of biological role, catalyzes the NADPH-dependent reduction of L-glutamate 5-phosphate into L-glutamate 5-semialdehyde and phosphate. The product spontaneously undergoes cyclization to form 1-pyrroline-5-carboxylate. This Alkaliphilus oremlandii (strain OhILAs) (Clostridium oremlandii (strain OhILAs)) protein is Gamma-glutamyl phosphate reductase.